A 770-amino-acid polypeptide reads, in one-letter code: Cyclopiane-type diterpene synthase (770 aa).

The terpene cyclase stretch occupies residues 5–335 (ITDEYAVGID…VPRYCKVDRN (331 aa)). Asp97 and Asp101 together coordinate Mg(2+). Residues Asp97, Asp101, 190–193 (RIVD), Asn234, 238–242 (SWDKE), and 328–329 (RY) each bind substrate. A DDXXD 1 motif is present at residues 97–101 (DDETD). Positions 234-242 (NDLFSWDKE) match the NSE/DTE motif. Residues 336 to 720 (PYKDHLEKYG…WALRLLIMKL (385 aa)) are prenyltransferase. The interval 371-397 (NQLKEPSSSTYKTHFSPLEPNPGPEQT) is disordered. Polar residues predominate over residues 374-383 (KEPSSSTYKT). Residues Lys423, Arg426, and His455 each coordinate isopentenyl diphosphate. Mg(2+) contacts are provided by Asp462 and Asp466. Residues 462–466 (DDIQD) carry the DDXXD 2 motif. Position 471 (Arg471) interacts with dimethylallyl diphosphate. Arg472 contacts isopentenyl diphosphate. Lys548, Thr549, Gln584, Asn591, Lys620, and Lys630 together coordinate dimethylallyl diphosphate.

In the N-terminal section; belongs to the terpene synthase family. The protein in the C-terminal section; belongs to the FPP/GGPP synthase family. As to quaternary structure, hexamer. Requires Mg(2+) as cofactor.

It catalyses the reaction isopentenyl diphosphate + (2E,6E)-farnesyl diphosphate = (2E,6E,10E)-geranylgeranyl diphosphate + diphosphate. The catalysed reaction is (2E,6E,10E)-geranylgeranyl diphosphate + H2O = (+)-penichrysol + diphosphate. It functions in the pathway secondary metabolite biosynthesis; terpenoid biosynthesis. In terms of biological role, bifunctional terpene synthase converts dimethylallyl diphosphate (DMAPP) and isopentenyl diphosphate (IPP) into a cyclopiane-type diterpene. The C-terminal prenyltransferase (PT) domain of PcCS catalyzes formation of geranylgeranyl pyrophosphate (GGPP), whereas the N-terminal terpene cyclase (TC) domain catalyzes the cyclization of GGPP to the cyclopiane-type diterpene penichrysol. This Penicillium chrysogenum (Penicillium notatum) protein is Cyclopiane-type diterpene synthase.